The chain runs to 409 residues: tRNA(Met) cytidine acetate ligase (409 aa).

Residues valine 7–histidine 20, glycine 102, asparagine 169, and arginine 194 each bind ATP.

Belongs to the TmcAL family.

Its subcellular location is the cytoplasm. The catalysed reaction is cytidine(34) in elongator tRNA(Met) + acetate + ATP = N(4)-acetylcytidine(34) in elongator tRNA(Met) + AMP + diphosphate. In terms of biological role, catalyzes the formation of N(4)-acetylcytidine (ac(4)C) at the wobble position of elongator tRNA(Met), using acetate and ATP as substrates. First activates an acetate ion to form acetyladenylate (Ac-AMP) and then transfers the acetyl group to tRNA to form ac(4)C34. The polypeptide is tRNA(Met) cytidine acetate ligase (Clostridium botulinum (strain Kyoto / Type A2)).